Here is a 337-residue protein sequence, read N- to C-terminus: Aspartate carbamoyltransferase catalytic subunit (337 aa).

Carbamoyl phosphate contacts are provided by Arg-57 and Thr-58. Lys-86 contacts L-aspartate. Carbamoyl phosphate is bound by residues Arg-107, His-135, and Gln-138. The L-aspartate site is built by Arg-172 and Arg-234. Residues Leu-274 and Pro-275 each contribute to the carbamoyl phosphate site.

Belongs to the aspartate/ornithine carbamoyltransferase superfamily. ATCase family. In terms of assembly, heterododecamer (2C3:3R2) of six catalytic PyrB chains organized as two trimers (C3), and six regulatory PyrI chains organized as three dimers (R2).

It carries out the reaction carbamoyl phosphate + L-aspartate = N-carbamoyl-L-aspartate + phosphate + H(+). Its pathway is pyrimidine metabolism; UMP biosynthesis via de novo pathway; (S)-dihydroorotate from bicarbonate: step 2/3. Its function is as follows. Catalyzes the condensation of carbamoyl phosphate and aspartate to form carbamoyl aspartate and inorganic phosphate, the committed step in the de novo pyrimidine nucleotide biosynthesis pathway. This Saccharophagus degradans (strain 2-40 / ATCC 43961 / DSM 17024) protein is Aspartate carbamoyltransferase catalytic subunit.